Here is a 130-residue protein sequence, read N- to C-terminus: Small ribosomal subunit protein uS8B (130 aa).

This sequence belongs to the universal ribosomal protein uS8 family. Component of the small ribosomal subunit (SSU). Mature yeast ribosomes consist of a small (40S) and a large (60S) subunit. The 40S small subunit contains 1 molecule of ribosomal RNA (18S rRNA) and 33 different proteins (encoded by 57 genes). The large 60S subunit contains 3 rRNA molecules (25S, 5.8S and 5S rRNA) and 46 different proteins (encoded by 81 genes).

It localises to the cytoplasm. Its function is as follows. Component of the ribosome, a large ribonucleoprotein complex responsible for the synthesis of proteins in the cell. The small ribosomal subunit (SSU) binds messenger RNAs (mRNAs) and translates the encoded message by selecting cognate aminoacyl-transfer RNA (tRNA) molecules. The large subunit (LSU) contains the ribosomal catalytic site termed the peptidyl transferase center (PTC), which catalyzes the formation of peptide bonds, thereby polymerizing the amino acids delivered by tRNAs into a polypeptide chain. The nascent polypeptides leave the ribosome through a tunnel in the LSU and interact with protein factors that function in enzymatic processing, targeting, and the membrane insertion of nascent chains at the exit of the ribosomal tunnel. This is Small ribosomal subunit protein uS8B from Saccharomyces cerevisiae (strain ATCC 204508 / S288c) (Baker's yeast).